A 436-amino-acid polypeptide reads, in one-letter code: UPF0597 protein YhaM (436 aa).

This sequence belongs to the UPF0597 family.

The chain is UPF0597 protein YhaM from Salmonella heidelberg (strain SL476).